Consider the following 483-residue polypeptide: Isocitrate dehydrogenase [NADP] (483 aa).

Thr74 serves as a coordination point for NADP(+). D-threo-isocitrate-binding residues include Ser83, Asn85, Arg89, Arg99, and Arg121. Asp232 is a binding site for Mg(2+). Residues 264–270 (HGSAPDI) and Asn277 each bind NADP(+).

It belongs to the isocitrate and isopropylmalate dehydrogenases family. Homodimer. Mg(2+) serves as cofactor. Requires Mn(2+) as cofactor.

The enzyme catalyses D-threo-isocitrate + NADP(+) = 2-oxoglutarate + CO2 + NADPH. In terms of biological role, catalyzes the oxidative decarboxylation of isocitrate to 2-oxoglutarate and carbon dioxide with the concomitant reduction of NADP(+). The protein is Isocitrate dehydrogenase [NADP] (icd) of Rickettsia typhi (strain ATCC VR-144 / Wilmington).